A 69-amino-acid chain; its full sequence is Sperm protamine P1 (69 aa).

Residues 1–69 (MARYRHSRSR…YSRRRRRRYY (69 aa)) form a disordered region.

It belongs to the protamine P1 family. In terms of tissue distribution, testis.

It is found in the nucleus. The protein resides in the chromosome. Its function is as follows. Protamines substitute for histones in the chromatin of sperm during the haploid phase of spermatogenesis. They compact sperm DNA into a highly condensed, stable and inactive complex. The polypeptide is Sperm protamine P1 (PRM1) (Pseudochirops cupreus (Coppery ringtail)).